The primary structure comprises 382 residues: 4-hydroxybutyrate dehydrogenase (382 aa).

NAD(+)-binding positions include Asp-37, Asn-67, 94-98, 138-142, and Lys-159; these read GSSID and TTSGT. Fe cation is bound by residues Asp-193, His-197, His-261, and His-280. His-280 is an NAD(+) binding site.

It belongs to the iron-containing alcohol dehydrogenase family. Fe cation serves as cofactor.

It catalyses the reaction 4-hydroxybutanoate + NAD(+) = succinate semialdehyde + NADH + H(+). Its activity is regulated as follows. Shows competitive inhibition of GHBDH activity by the product succinic semialdehyde, and non-competitive inhibitions by the three other substrate-product combinations. The conversion of GHB to SSA is activated by two different saturating purified nudix hydrolases, B.methanolicus activator ACT and E.coli NudF. The nudix hydrolases do not activate the reverse reaction. Involved in the degradation of 4-hydroxybutyrate. Catalyzes the interconversion of gamma-hydroxybutyrate (GHB) and succinic semialdehyde (SSA). The sequence is that of 4-hydroxybutyrate dehydrogenase from Cupriavidus necator (Alcaligenes eutrophus).